A 261-amino-acid chain; its full sequence is Auxin-responsive protein IAA10 (261 aa).

The segment at 1–43 is disordered; the sequence is MNGLQEVCSSSGSVMIGLPAEEDENAAHSSEDSSCPDESVSET. The short motif at 45–49 is the EAR-like (transcriptional repression) element; it reads LDLAL. The tract at residues 62-90 is disordered; the sequence is LSSSSSSLTRESGTKRSADSSPAAASNAT. Residues 80 to 89 show a composition bias toward low complexity; sequence DSSPAAASNA. Residues 151–253 form the PB1 domain; that stretch reads SMLVKVTMDG…SVTRLRIMKT (103 aa).

Belongs to the Aux/IAA family. Homodimers and heterodimers. Preferentially expressed in vegetative organs.

The protein localises to the nucleus. Aux/IAA proteins are short-lived transcriptional factors that function as repressors of early auxin response genes at low auxin concentrations. Repression is thought to result from the interaction with auxin response factors (ARFs), proteins that bind to the auxin-responsive promoter element (AuxRE). Formation of heterodimers with ARF proteins may alter their ability to modulate early auxin response genes expression. This Arabidopsis thaliana (Mouse-ear cress) protein is Auxin-responsive protein IAA10 (IAA10).